The sequence spans 299 residues: Apolipoprotein E (299 aa).

The signal sequence occupies residues Met1–Ala18. Repeat copies occupy residues Leu74–Ala95, Pro96–Gly117, Ala118–Gly139, Gln140–Leu161, Arg162–Glu183, Arg184–Ala205, and Gly224–Glu245. The 8 X 22 AA approximate tandem repeats stretch occupies residues Leu74–Glu245. Methionine sulfoxide is present on Met137. Position 141 is a phosphoserine (Ser141). Positions His152–Arg162 are LDL and other lipoprotein receptors binding. Position 156-159 (Met156–Arg159) interacts with heparin. The tract at residues Ser204–Met273 is lipid-binding and lipoprotein association. Gly219 to Leu226 is a heparin binding site. The segment at Arg261–Met273 is specificity for association with VLDL.

Belongs to the apolipoprotein A1/A4/E family. In terms of assembly, homotetramer. May interact with ABCA1; functionally associated with ABCA1 in the biogenesis of HDLs. May interact with APP/A4 amyloid-beta peptide; the interaction is extremely stable in vitro but its physiological significance is unclear. May interact with MAPT. May interact with MAP2. In the cerebrospinal fluid, interacts with secreted SORL1. Interacts with PMEL; this allows the loading of PMEL luminal fragment on ILVs to induce fibril nucleation. Post-translationally, APOE exists as multiple glycosylated and sialylated glycoforms within cells and in plasma. The extent of glycosylation and sialylation are tissue and context specific. Glycated in plasma VLDL. In terms of processing, phosphorylated by FAM20C in the extracellular medium.

The protein localises to the secreted. The protein resides in the extracellular space. It localises to the extracellular matrix. It is found in the extracellular vesicle. Its subcellular location is the endosome. The protein localises to the multivesicular body. Its function is as follows. APOE is an apolipoprotein, a protein associating with lipid particles, that mainly functions in lipoprotein-mediated lipid transport between organs via the plasma and interstitial fluids. APOE is a core component of plasma lipoproteins and is involved in their production, conversion and clearance. Apolipoproteins are amphipathic molecules that interact both with lipids of the lipoprotein particle core and the aqueous environment of the plasma. As such, APOE associates with chylomicrons, chylomicron remnants, very low density lipoproteins (VLDL) and intermediate density lipoproteins (IDL) but shows a preferential binding to high-density lipoproteins (HDL). It also binds a wide range of cellular receptors including the LDL receptor/LDLR, the LDL receptor-related proteins LRP1, LRP2 and LRP8 and the very low-density lipoprotein receptor/VLDLR that mediate the cellular uptake of the APOE-containing lipoprotein particles. Finally, APOE also has a heparin-binding activity and binds heparan-sulfate proteoglycans on the surface of cells, a property that supports the capture and the receptor-mediated uptake of APOE-containing lipoproteins by cells. A main function of APOE is to mediate lipoprotein clearance through the uptake of chylomicrons, VLDLs, and HDLs by hepatocytes. APOE is also involved in the biosynthesis by the liver of VLDLs as well as their uptake by peripheral tissues ensuring the delivery of triglycerides and energy storage in muscle, heart and adipose tissues. By participating in the lipoprotein-mediated distribution of lipids among tissues, APOE plays a critical role in plasma and tissues lipid homeostasis. APOE is also involved in two steps of reverse cholesterol transport, the HDLs-mediated transport of cholesterol from peripheral tissues to the liver, and thereby plays an important role in cholesterol homeostasis. First, it is functionally associated with ABCA1 in the biogenesis of HDLs in tissues. Second, it is enriched in circulating HDLs and mediates their uptake by hepatocytes. APOE also plays an important role in lipid transport in the central nervous system, regulating neuron survival and sprouting. The polypeptide is Apolipoprotein E (APOE) (Erethizon dorsatum (North American porcupine)).